The primary structure comprises 76 residues: Probable insulin-like peptide alpha-type 1 (76 aa).

Positions 1–24 (MKTYSFFVLFIVFIFFISSSKSHS) are cleaved as a signal peptide. 3 cysteine pairs are disulfide-bonded: Cys-32–Cys-60, Cys-44–Cys-73, and Cys-48–Cys-74.

Belongs to the insulin family.

It is found in the secreted. This Caenorhabditis elegans protein is Probable insulin-like peptide alpha-type 1 (ins-21).